We begin with the raw amino-acid sequence, 338 residues long: Heat-inducible transcription repressor HrcA (338 aa).

Belongs to the HrcA family.

In terms of biological role, negative regulator of class I heat shock genes (grpE-dnaK-dnaJ and groELS operons). Prevents heat-shock induction of these operons. In Polaromonas sp. (strain JS666 / ATCC BAA-500), this protein is Heat-inducible transcription repressor HrcA.